The following is a 202-amino-acid chain: Peptide deformylase (202 aa).

Fe cation-binding residues include C121 and H163. E164 is an active-site residue. A Fe cation-binding site is contributed by H167.

It belongs to the polypeptide deformylase family. The cofactor is Fe(2+).

It catalyses the reaction N-terminal N-formyl-L-methionyl-[peptide] + H2O = N-terminal L-methionyl-[peptide] + formate. Functionally, removes the formyl group from the N-terminal Met of newly synthesized proteins. Requires at least a dipeptide for an efficient rate of reaction. N-terminal L-methionine is a prerequisite for activity but the enzyme has broad specificity at other positions. The polypeptide is Peptide deformylase (Synechococcus sp. (strain CC9311)).